The sequence spans 114 residues: MGSRLLCWVLLCLLGAGPVKAGVTQTPRYLIKTRGQQVTLSCSPISGHRSVSWYQQTPGQGLQFLFEYFSETQRNKGNFPGRFSGRQFSNSRSEMNVSTLELGDSALYLCASSL.

Residues 1–21 (MGSRLLCWVLLCLLGAGPVKA) form the signal peptide. The region spanning 22–114 (GVTQTPRYLI…SALYLCASSL (93 aa)) is the Ig-like domain. A disulfide bond links cysteine 42 and cysteine 110. A glycan (N-linked (GlcNAc...) asparagine) is linked at asparagine 96.

Alpha-beta TR is a heterodimer composed of an alpha and beta chain; disulfide-linked. The alpha-beta TR is associated with the transmembrane signaling CD3 coreceptor proteins to form the TR-CD3 (TcR or TCR). The assembly of alpha-beta TR heterodimers with CD3 occurs in the endoplasmic reticulum where a single alpha-beta TR heterodimer associates with one CD3D-CD3E heterodimer, one CD3G-CD3E heterodimer and one CD247 homodimer forming a stable octameric structure. CD3D-CD3E and CD3G-CD3E heterodimers preferentially associate with TR alpha and TR beta chains, respectively. The association of the CD247 homodimer is the last step of TcR assembly in the endoplasmic reticulum and is required for transport to the cell surface.

Its subcellular location is the cell membrane. V region of the variable domain of T cell receptor (TR) beta chain that participates in the antigen recognition. Alpha-beta T cell receptors are antigen specific receptors which are essential to the immune response and are present on the cell surface of T lymphocytes. Recognize peptide-major histocompatibility (MH) (pMH) complexes that are displayed by antigen presenting cells (APC), a prerequisite for efficient T cell adaptive immunity against pathogens. Binding of alpha-beta TR to pMH complex initiates TR-CD3 clustering on the cell surface and intracellular activation of LCK that phosphorylates the ITAM motifs of CD3G, CD3D, CD3E and CD247 enabling the recruitment of ZAP70. In turn ZAP70 phosphorylates LAT, which recruits numerous signaling molecules to form the LAT signalosome. The LAT signalosome propagates signal branching to three major signaling pathways, the calcium, the mitogen-activated protein kinase (MAPK) kinase and the nuclear factor NF-kappa-B (NF-kB) pathways, leading to the mobilization of transcription factors that are critical for gene expression and essential for T cell growth and differentiation. The T cell repertoire is generated in the thymus, by V-(D)-J rearrangement. This repertoire is then shaped by intrathymic selection events to generate a peripheral T cell pool of self-MH restricted, non-autoaggressive T cells. Post-thymic interaction of alpha-beta TR with the pMH complexes shapes TR structural and functional avidity. The protein is T cell receptor beta variable 5-1 of Homo sapiens (Human).